Here is a 447-residue protein sequence, read N- to C-terminus: Signal recognition particle 54 kDa protein (447 aa).

Residues 108-115 (GLYGMGKT), 188-192 (DTAGR), and 246-249 (TKLD) each bind GTP.

Belongs to the GTP-binding SRP family. SRP54 subfamily. Part of the signal recognition particle protein translocation system, which is composed of SRP and FtsY. Archaeal SRP consists of a 7S RNA molecule of 300 nucleotides and two protein subunits: SRP54 and SRP19.

Its subcellular location is the cytoplasm. The catalysed reaction is GTP + H2O = GDP + phosphate + H(+). Its function is as follows. Involved in targeting and insertion of nascent membrane proteins into the cytoplasmic membrane. Binds to the hydrophobic signal sequence of the ribosome-nascent chain (RNC) as it emerges from the ribosomes. The SRP-RNC complex is then targeted to the cytoplasmic membrane where it interacts with the SRP receptor FtsY. The chain is Signal recognition particle 54 kDa protein from Methanopyrus kandleri (strain AV19 / DSM 6324 / JCM 9639 / NBRC 100938).